Reading from the N-terminus, the 286-residue chain is L-cysteine S-thiosulfotransferase subunit SoxA (286 aa).

The signal sequence occupies residues 1–28 (MKKTIQRGLFTGALVLLTAMTSKPAHAA). Cys-106 and Cys-137 are oxidised to a cystine. Residues 180-286 (DAYMKGKEMF…LKFNGPASRK (107 aa)) form the Cytochrome c domain. Cys-200 and His-204 together coordinate heme. Arg-243 lines the substrate pocket. Cys-247 is a heme binding site. Cys-247 serves as the catalytic Cysteine persulfide intermediate.

The protein belongs to the SoxA family. As to quaternary structure, heterodimer of SoxA and SoxX. The SoxAX complex interacts with CT1020, SoxAX-binding protein SaxB (SoxK); this interaction stimulates catalytic activity of the complex. Requires heme as cofactor. Cysteine persulfide at Cys-247.

The protein localises to the periplasm. It carries out the reaction L-cysteinyl-[SoxY protein] + thiosulfate + 2 Fe(III)-[cytochrome c] = S-sulfosulfanyl-L-cysteinyl-[SoxY protein] + 2 Fe(II)-[cytochrome c] + 2 H(+). The catalysed reaction is S-sulfanyl-L-cysteinyl-[SoxY protein] + thiosulfate + 2 Fe(III)-[cytochrome c] = S-(2-sulfodisulfanyl)-L-cysteinyl-[SoxY protein] + 2 Fe(II)-[cytochrome c] + 2 H(+). C-type monoheme cytochrome, which is part of the SoxAX cytochrome complex involved in sulfur oxidation. The SoxAX complex catalyzes the formation of a heterodisulfide bond between the conserved cysteine residue on a sulfur carrier SoxYZ complex subunit SoxY and thiosulfate or other inorganic sulfur substrates. This leads to the liberation of two electrons, which may be transferred from the SoxAX complex to another cytochrome c and which then may be used for reductive CO(2) fixation. This chain is L-cysteine S-thiosulfotransferase subunit SoxA, found in Chlorobaculum thiosulfatiphilum (Chlorobium limicola f.sp. thiosulfatophilum).